A 520-amino-acid polypeptide reads, in one-letter code: Kelch domain-containing protein 4 (520 aa).

Residues 1–10 are compositionally biased toward basic residues; the sequence is MGKKGKKEKK. The interval 1 to 33 is disordered; that stretch reads MGKKGKKEKKGRGAEKTAAKMEKKVSKRSRKEE. The segment covering 11 to 24 has biased composition (basic and acidic residues); sequence GRGAEKTAAKMEKK. 5 Kelch repeats span residues 77-129, 133-187, 188-241, 243-289, and 308-361; these read ELIL…VVPQ, QLWV…AWKR, QLIL…VTPQ, GIVV…MNPS, and QTLF…RRGR. Disordered regions lie at residues 346-379, 402-431, and 481-520; these read QLKGPKSEKKKRRRGRKEEPEGGSRPACGGAGTQ, LTAPGSAGQPRSEDEDSLEEAGSPAPGPCP, and DPETQEWLEETDSEEDSEEVEGAEGGVDDEDSGEESGAED. A phosphoserine mark is found at serine 413 and serine 418. The stretch at 443 to 494 is one Kelch 6 repeat; that stretch reads VLYVYGGMFEAGDRQVTLSDLHCLDLHRMEAWKALVEMDPETQEWLEETDSE.

This Homo sapiens (Human) protein is Kelch domain-containing protein 4 (KLHDC4).